The following is a 262-amino-acid chain: Type III pantothenate kinase (262 aa).

Position 6 to 13 (6 to 13 (DVGNTNAV)) interacts with ATP. Residues Tyr100 and 107-110 (GADR) contribute to the substrate site. The active-site Proton acceptor is Asp109. K(+) is bound at residue Asp129. Thr132 provides a ligand contact to ATP. Thr184 is a binding site for substrate.

Belongs to the type III pantothenate kinase family. Homodimer. The cofactor is NH4(+). It depends on K(+) as a cofactor.

The protein resides in the cytoplasm. The enzyme catalyses (R)-pantothenate + ATP = (R)-4'-phosphopantothenate + ADP + H(+). The protein operates within cofactor biosynthesis; coenzyme A biosynthesis; CoA from (R)-pantothenate: step 1/5. Functionally, catalyzes the phosphorylation of pantothenate (Pan), the first step in CoA biosynthesis. The chain is Type III pantothenate kinase from Bacillus cereus (strain B4264).